The sequence spans 213 residues: MEIYMSVFNTFVEFVARIVAPMQRQFINFIRIAIFIVMAWIGGLKVCQYEADGIAHFVSNSPFFSYMYEKGPNLVPNDKGELVMEYTLHKNPEGKMVAKNIEWHKENGTYTASYIIGAIIVTVGILTLAGIWNATAGLAGGLLTFGMSIVTLSFLITTPEAWVPNLGGDLPTPAYGFPYLSGVGRLVIKDIIMMAGGLTAAAECANRILARKK.

3 helical membrane passes run Phe-26–Val-46, Ala-112–Trp-132, and Ala-136–Ile-156.

The protein resides in the cell membrane. This is an uncharacterized protein from Haemophilus influenzae (strain ATCC 51907 / DSM 11121 / KW20 / Rd).